Consider the following 452-residue polypeptide: UDP-glycosyltransferase 76E4 (452 aa).

Residues Thr-274, 333 to 335, 350 to 358, and 372 to 375 contribute to the UDP-alpha-D-glucose site; these read APQ, HCGWNSTLE, and QGEQ.

The protein belongs to the UDP-glycosyltransferase family.

The polypeptide is UDP-glycosyltransferase 76E4 (UGT76E4) (Arabidopsis thaliana (Mouse-ear cress)).